A 269-amino-acid chain; its full sequence is MTTAPFLFPSLSRLHSARASSFPKPPVGSGAGVAFPARPYGSSLRLRSSVMAATGVGGNGSPMAPEESTVSSRLGEVKRVTKETNVHVKINLDGTGVANSSTGIPFLDHMLDQLASHGLFDVYVKATGDTHIDDHHSNEDIALAIGTALLQALGDRKGINRFGHFTAPLDEAAVEVILDLSGRPHLSCGLSIPTERVGTYDTQLVEHFFQSLVNTSGMTLHIRQLAGNNSHHIIEATFKAFARALRQATEYDLRRQGTIPSSKGVLSRS.

The N-terminal 51 residues, 1–51 (MTTAPFLFPSLSRLHSARASSFPKPPVGSGAGVAFPARPYGSSLRLRSSVM), are a transit peptide targeting the chloroplast. Residues Glu83, 109–117 (HMLDQLASH), 135–139 (HHSNE), Arg161, and Arg183 each bind substrate. His109, His135, His136, and Glu139 together coordinate Mn(2+). Positions 207, 231, 232, and 235 each coordinate Mn(2+). Residues 231–239 (HHIIEATFK) and 261–263 (SSK) each bind substrate.

This sequence belongs to the imidazoleglycerol-phosphate dehydratase family. It depends on Mn(2+) as a cofactor.

The protein localises to the plastid. It is found in the chloroplast. The catalysed reaction is D-erythro-1-(imidazol-4-yl)glycerol 3-phosphate = 3-(imidazol-4-yl)-2-oxopropyl phosphate + H2O. The protein operates within amino-acid biosynthesis; L-histidine biosynthesis; L-histidine from 5-phospho-alpha-D-ribose 1-diphosphate: step 6/9. The chain is Imidazoleglycerol-phosphate dehydratase 2, chloroplastic from Triticum aestivum (Wheat).